A 317-amino-acid chain; its full sequence is Melanocyte-stimulating hormone receptor (317 aa).

The Extracellular segment spans residues 1-37 (MPMHGAQRKLLGSLNSTPTATSNLGLAANHTGAPCLE). An N-linked (GlcNAc...) asparagine glycan is attached at asparagine 29. The helical transmembrane segment at 38 to 63 (VSIPDGLFLSLGLVSLVENVLVVAAI) threads the bilayer. At 64 to 72 (AKNRNLHSS) the chain is on the cytoplasmic side. Residues 73 to 93 (MYCFICCLALSDLLVSGSNML) traverse the membrane as a helical segment. Topologically, residues 94-118 (ETAVILLLEAGALATRTSAMQQLHN) are extracellular. The chain crosses the membrane as a helical span at residues 119 to 140 (TIDVLTCSSMLCSLCFLGAIAV). Residues 141–163 (DRYISIFYALRYHSIMTLPRAQR) are Cytoplasmic-facing. A helical membrane pass occupies residues 164–183 (AIAAIWVASXLSSTLFITYY). Topologically, residues 184–191 (DHAAVLLC) are extracellular. A helical membrane pass occupies residues 192 to 211 (LVVFFLAMLVLMAVLYVHML). Over 212 to 240 (ARACQHAHGIIRLHKRQTPAHQGFGLRGA) the chain is Cytoplasmic. The helical transmembrane segment at 241 to 266 (ATLTILLGIFFLCWGPFFLHLTLVVF) threads the bilayer. The Extracellular segment spans residues 267-279 (CPQHLTCSCIFKN). Residues 280–300 (FKVFLTLIICNTIIDPLIYAF) traverse the membrane as a helical segment. Residues 301-317 (RSQELRRTLKEVLLCSW) are Cytoplasmic-facing. Residue cysteine 315 is the site of S-palmitoyl cysteine attachment.

The protein belongs to the G-protein coupled receptor 1 family. Interacts with MGRN1, but does not undergo MGRN1-mediated ubiquitination; this interaction competes with GNAS-binding and thus inhibits agonist-induced cAMP production. Interacts with OPN3; the interaction results in a decrease in MC1R-mediated cAMP signaling and ultimately a decrease in melanin production in melanocytes.

It localises to the cell membrane. Its function is as follows. Receptor for MSH (alpha, beta and gamma) and ACTH. The activity of this receptor is mediated by G proteins which activate adenylate cyclase. Mediates melanogenesis, the production of eumelanin (black/brown) and phaeomelanin (red/yellow), via regulation of cAMP signaling in melanocytes. In Saguinus midas (Golden-handed tamarin), this protein is Melanocyte-stimulating hormone receptor (MC1R).